Consider the following 386-residue polypeptide: NADH-ubiquinone oxidoreductase chain 4 (386 aa).

Transmembrane regions (helical) follow at residues 8 to 28, 37 to 57, 61 to 81, 91 to 111, 133 to 153, 167 to 187, 189 to 209, 219 to 239, 247 to 267, 283 to 303, and 315 to 335; these read SEFHLEWGITLLTLNFSYFLF, WPLSYSTILVSLFVLLWLTFT, FILFYVFFECSLIPTIILILG, ASYYFLFYTLLSSLPLLFIII, IFLLAILSFLVKLPVYFAHIW, MVLAAILLKLGGYGLYLVQVL, IYSETTLMGVCLMGGIFSCLI, LIAYSSVAHMSFVILGMLMSC, ILMMVSHGICSSGLFYLSYLF, ISLFPYLCFWWLSLSFLNMGL, and FFIGAFSLDWMVVGLSGILCF.

Belongs to the complex I subunit 4 family.

The protein resides in the mitochondrion membrane. The catalysed reaction is a ubiquinone + NADH + 5 H(+)(in) = a ubiquinol + NAD(+) + 4 H(+)(out). Its function is as follows. Core subunit of the mitochondrial membrane respiratory chain NADH dehydrogenase (Complex I) that is believed to belong to the minimal assembly required for catalysis. Complex I functions in the transfer of electrons from NADH to the respiratory chain. The immediate electron acceptor for the enzyme is believed to be ubiquinone. This is NADH-ubiquinone oxidoreductase chain 4 (ND4) from Artemia franciscana (Brine shrimp).